The primary structure comprises 33 residues: Pardaxin P-4 (33 aa).

The protein belongs to the pardaxin family. As to quaternary structure, monomer. In aqueous solution exists as a tetramer.

It localises to the secreted. The protein localises to the target cell membrane. Functionally, exhibits unusual shark repellent and surfactant properties. Forms voltage-dependent, ion-permeable channels in membranes. At high concentration causes cell membrane lysis. The polypeptide is Pardaxin P-4 (Pardachirus marmoratus (Finless sole)).